We begin with the raw amino-acid sequence, 518 residues long: GMP synthase [glutamine-hydrolyzing] (518 aa).

The Glutamine amidotransferase type-1 domain maps to 13-203 (KIIVLDFGSQ…ALNVCGCKGD (191 aa)). Cys90 functions as the Nucleophile in the catalytic mechanism. Residues His177 and Glu179 contribute to the active site. Residues 204 to 393 (WTMENFSEVE…LGMPDAIVWR (190 aa)) enclose the GMPS ATP-PPase domain. An ATP-binding site is contributed by 231-237 (SGGVDSS).

As to quaternary structure, homodimer.

The enzyme catalyses XMP + L-glutamine + ATP + H2O = GMP + L-glutamate + AMP + diphosphate + 2 H(+). Its pathway is purine metabolism; GMP biosynthesis; GMP from XMP (L-Gln route): step 1/1. Catalyzes the synthesis of GMP from XMP. This Listeria monocytogenes serovar 1/2a (strain ATCC BAA-679 / EGD-e) protein is GMP synthase [glutamine-hydrolyzing].